We begin with the raw amino-acid sequence, 96 residues long: RNA-binding protein Hfq (96 aa).

The Sm domain maps to Asp-9–Val-68. A disordered region spans residues Ala-65–Glu-96. The segment covering His-70–Glu-96 has biased composition (low complexity).

It belongs to the Hfq family. In terms of assembly, homohexamer.

Functionally, RNA chaperone that binds small regulatory RNA (sRNAs) and mRNAs to facilitate mRNA translational regulation in response to envelope stress, environmental stress and changes in metabolite concentrations. Also binds with high specificity to tRNAs. The protein is RNA-binding protein Hfq of Mannheimia succiniciproducens (strain KCTC 0769BP / MBEL55E).